The sequence spans 152 residues: 3-hydroxyacyl-[acyl-carrier-protein] dehydratase FabZ (152 aa).

Histidine 57 is an active-site residue.

This sequence belongs to the thioester dehydratase family. FabZ subfamily.

It localises to the cytoplasm. It carries out the reaction a (3R)-hydroxyacyl-[ACP] = a (2E)-enoyl-[ACP] + H2O. In terms of biological role, involved in unsaturated fatty acids biosynthesis. Catalyzes the dehydration of short chain beta-hydroxyacyl-ACPs and long chain saturated and unsaturated beta-hydroxyacyl-ACPs. In Pasteurella multocida (strain Pm70), this protein is 3-hydroxyacyl-[acyl-carrier-protein] dehydratase FabZ.